The primary structure comprises 453 residues: Bifunctional protein GlmU (453 aa).

Positions 1–227 (MNKLSVVILA…LMEVEGVNNR (227 aa)) are pyrophosphorylase. UDP-N-acetyl-alpha-D-glucosamine is bound by residues 9–12 (LAAG), Lys-23, Gln-74, 79–80 (GT), 101–103 (YGD), Gly-138, Glu-152, Asn-167, and Asn-225. Asp-103 provides a ligand contact to Mg(2+). Asn-225 lines the Mg(2+) pocket. The segment at 228-248 (LQLANLERHYQRKQVEKLLLA) is linker. The segment at 249-453 (GVTFADPARF…ISNWQRPKRK (205 aa)) is N-acetyltransferase. Residues Arg-331 and Lys-349 each coordinate UDP-N-acetyl-alpha-D-glucosamine. His-361 functions as the Proton acceptor in the catalytic mechanism. Positions 364 and 375 each coordinate UDP-N-acetyl-alpha-D-glucosamine. Acetyl-CoA is bound by residues Ala-378, 384 to 385 (NY), Ser-403, Ala-421, and Arg-438.

In the N-terminal section; belongs to the N-acetylglucosamine-1-phosphate uridyltransferase family. This sequence in the C-terminal section; belongs to the transferase hexapeptide repeat family. In terms of assembly, homotrimer. The cofactor is Mg(2+).

It localises to the cytoplasm. It catalyses the reaction alpha-D-glucosamine 1-phosphate + acetyl-CoA = N-acetyl-alpha-D-glucosamine 1-phosphate + CoA + H(+). It carries out the reaction N-acetyl-alpha-D-glucosamine 1-phosphate + UTP + H(+) = UDP-N-acetyl-alpha-D-glucosamine + diphosphate. It functions in the pathway nucleotide-sugar biosynthesis; UDP-N-acetyl-alpha-D-glucosamine biosynthesis; N-acetyl-alpha-D-glucosamine 1-phosphate from alpha-D-glucosamine 6-phosphate (route II): step 2/2. The protein operates within nucleotide-sugar biosynthesis; UDP-N-acetyl-alpha-D-glucosamine biosynthesis; UDP-N-acetyl-alpha-D-glucosamine from N-acetyl-alpha-D-glucosamine 1-phosphate: step 1/1. Its pathway is bacterial outer membrane biogenesis; LPS lipid A biosynthesis. In terms of biological role, catalyzes the last two sequential reactions in the de novo biosynthetic pathway for UDP-N-acetylglucosamine (UDP-GlcNAc). The C-terminal domain catalyzes the transfer of acetyl group from acetyl coenzyme A to glucosamine-1-phosphate (GlcN-1-P) to produce N-acetylglucosamine-1-phosphate (GlcNAc-1-P), which is converted into UDP-GlcNAc by the transfer of uridine 5-monophosphate (from uridine 5-triphosphate), a reaction catalyzed by the N-terminal domain. The polypeptide is Bifunctional protein GlmU (Histophilus somni (strain 2336) (Haemophilus somnus)).